Consider the following 169-residue polypeptide: Cell division inhibitor SulA (169 aa).

A ftsZ binding region spans residues 106-112; the sequence is ALRTGNY. The interval 162–169 is lon protease binding; it reads KIHSNLYH.

This sequence belongs to the SulA family. Interacts with FtsZ. Is rapidly cleaved and degraded by the Lon protease once DNA damage is repaired.

In terms of biological role, component of the SOS system and an inhibitor of cell division. Accumulation of SulA causes rapid cessation of cell division and the appearance of long, non-septate filaments. In the presence of GTP, binds a polymerization-competent form of FtsZ in a 1:1 ratio, thus inhibiting FtsZ polymerization and therefore preventing it from participating in the assembly of the Z ring. This mechanism prevents the premature segregation of damaged DNA to daughter cells during cell division. In Salmonella gallinarum (strain 287/91 / NCTC 13346), this protein is Cell division inhibitor SulA.